A 119-amino-acid chain; its full sequence is MGYTLFRFIVPFNPYFSSFYPSFPFYLSFPFCPSFPSFLSFPSSIFSLSFPSFLHHHLLIFSSLRIPFPWFLPLLQLVYLCYKVPWLLEWLIHSSKLAYQCCRILIFAQLVSLVRNQKH.

Transmembrane regions (helical) follow at residues 19 to 39 (FYPS…PSFL) and 68 to 88 (FPWF…PWLL).

It localises to the membrane. This is an uncharacterized protein from Saccharomyces cerevisiae (strain ATCC 204508 / S288c) (Baker's yeast).